The following is a 267-amino-acid chain: MSSTPDHRPSKVSKELANAACDDFKRKAIDEAKKRAVAQRVDYDTFKNMVLTAHLKPITAPKQLNNDRPLPCWSFGVDGKMLKEQISQSQLPPTTPTEVPTTSGDFTRDWRRNCPTPDDKYRYLKLCGPEGLQAVFRVEISAEVLREMLAVLEACWLGHGGVAEEAEGGAGAALLEAAFVVQVLEAVSTAGRFSLTVKLLGSSAKPTLERLFSGLQSAVLASQAAHQGKQEQPAAAEAPHEEGGSTVDPCSPTRVAALQAMYGLPPS.

2 disordered regions span residues 86–111 and 226–250; these read ISQS…RDWR and HQGK…VDPC.

Belongs to the DNAAF19/PR46b family. As to quaternary structure, homodimer.

It is found in the cytoplasm. The protein resides in the cell projection. It localises to the cilium. Its subcellular location is the flagellum. In terms of biological role, dynein-attachment factor required for cilia motility. The chain is Dynein axonemal assembly factor 19 homolog (PR46b) from Chlamydomonas reinhardtii (Chlamydomonas smithii).